Consider the following 246-residue polypeptide: tRNA (guanine-N(1)-)-methyltransferase (246 aa).

Residue Gly114 coordinates S-adenosyl-L-methionine.

It belongs to the RNA methyltransferase TrmD family. As to quaternary structure, homodimer.

The protein resides in the cytoplasm. The enzyme catalyses guanosine(37) in tRNA + S-adenosyl-L-methionine = N(1)-methylguanosine(37) in tRNA + S-adenosyl-L-homocysteine + H(+). Its function is as follows. Specifically methylates guanosine-37 in various tRNAs. The chain is tRNA (guanine-N(1)-)-methyltransferase from Novosphingobium aromaticivorans (strain ATCC 700278 / DSM 12444 / CCUG 56034 / CIP 105152 / NBRC 16084 / F199).